Here is a 535-residue protein sequence, read N- to C-terminus: UDP-glycosyltransferase stmC (535 aa).

Asn70 and Asn422 each carry an N-linked (GlcNAc...) asparagine glycan. Residues 506–526 form a helical membrane-spanning segment; sequence ASNLDLYIVCIAFVAVPVGVA.

This sequence belongs to the glycosyltransferase 28 family.

It localises to the membrane. It carries out the reaction stromemycin aglycone + UDP-alpha-D-glucose = stromemycin + UDP + H(+). It catalyses the reaction exophillate aglycone + UDP-alpha-D-glucose = exophillate + UDP + H(+). It functions in the pathway mycotoxin biosynthesis. Functionally, UDP-glycosyltransferase; part of the gene cluster that mediates the biosynthesis of stromemycin, a depside C-glucoside with two unsaturated C9 side chains belonging to aromatic polyketide glycosides. Acts as the tailoring enzyme responsible for 3-C-glucosylation of bininalkenylresorcylic acid produced by the combined action of the HR-PKS stmA and the NR-PKS stmB to yield stromemycin. Possesses a relatively strict acceptor specificity towards bininalkenylresorcylic acid for C-glycosylation, but is able to use several donors including UDP-alpha-D-galactose, UDP-alpha-D-xylose, UDP-alpha-D-4-keto-6-deoxyglucose, UDP-alpha-D-quinovose, and UDP-beta-L-rhamnose. This chain is UDP-glycosyltransferase stmC, found in Aspergillus ustus.